We begin with the raw amino-acid sequence, 62 residues long: Small ribosomal subunit protein eS27 (62 aa).

The Zn(2+) site is built by Cys-17, Cys-20, Cys-36, and Cys-39. A C4-type zinc finger spans residues 17 to 39 (CPDCDNEQTVFSKASTTVKCVVC).

This sequence belongs to the eukaryotic ribosomal protein eS27 family. Part of the 30S ribosomal subunit. The cofactor is Zn(2+).

This Methanoregula boonei (strain DSM 21154 / JCM 14090 / 6A8) protein is Small ribosomal subunit protein eS27.